The chain runs to 93 residues: Large ribosomal subunit protein uL23cz/uL23cy (93 aa).

Belongs to the universal ribosomal protein uL23 family. In terms of assembly, part of the 50S ribosomal subunit.

The protein resides in the plastid. The protein localises to the chloroplast. Functionally, binds to 23S rRNA. In Eucalyptus globulus subsp. globulus (Tasmanian blue gum), this protein is Large ribosomal subunit protein uL23cz/uL23cy (rpl23-A).